Reading from the N-terminus, the 433-residue chain is uncharacterized protein (433 aa).

Residues 61 to 178 enclose the HD domain; the sequence is RFNHSLGVYE…QIDADRMDYL (118 aa).

This is an uncharacterized protein from Bacillus subtilis (strain 168).